The primary structure comprises 553 residues: MQGPHLSLLLLLLATMGAVLQADTVEELTNTRGLIFLEDGVWPPSSPPEPLCLVAVRGEGDTSKASLTVVGGLHSYEHAFLEAVQESRWGPQDLATFGVCSTDSQTTLPALQRLGAWLGETGEQQLLVLHLAEVIWEPQLLLKFQEPPPGGASRWEQALLVLYPGPGPQVTVTGAGLQGTQSLCPTRDTRYLVLTVHFPAGAWSGSGLALTLQPSKEGATLTIAQLQAFLFGSDSRCFTRMTPTLVLLPPTGPTPQPAHGQLDTVPFPQPGLSLEPEDLPHSADPFLETLTRLVRALRGPLTRASNTRLALDPGALASFPQGLVNLSDPVALGRLLDGEEPLLLLLSPAAATVGEPMRLHSPTSAPWAAGLARRVAVELQAAASELRDLPGLPPTAPPLLSRLLALCPNDSRSAGDPLRALLLLKALQGLRAEWRGREGRGRAGRSKGTGTDGLCALRELSVDLRAERSVLIPETYQANNCQGACAWPQSDRNPRYGNHVVLLLKMQARGAALGRLPCCVPTAYTGKLLISLSEEHISAHHVPNMVATECGCR.

Positions 1 to 22 are cleaved as a signal peptide; sequence MQGPHLSLLLLLLATMGAVLQA. Positions 23–445 are excised as a propeptide; that stretch reads DTVEELTNTR…GREGRGRAGR (423 aa). N-linked (GlcNAc...) asparagine glycans are attached at residues asparagine 325 and asparagine 409. Intrachain disulfides connect cysteine 455-cysteine 519, cysteine 481-cysteine 550, and cysteine 485-cysteine 552.

The protein belongs to the TGF-beta family. Homodimer; disulfide-linked. Preproprotein is proteolytically processed to generate N- and C-terminal cleavage products that homodimerize and associate to form a biologically active non-covalent complex. Binding of the non-covalent complex to AMHR2 induces dissociation of the pro-region from the mature C-terminal dimer. The N-terminal portion of the protein, despite having no intrinsic activity, has the role of amplifying the activity of the C-terminus. In terms of tissue distribution, mainly expressed in granulosa cells from preantral and small antral follicles.

The protein localises to the secreted. Plays an important role in several reproductive functions. Induces Muellerian duct regression during male fetal sexual differentiation and plays a role in Leydig cell differentiation and function. In female acts as a negative regulator of the primordial to primary follicle transition and decreases FSH sensitivity of growing follicles. AMH signals by binding to a specific type-II receptor, AMHR2, that heterodimerizes with type-I receptors (ACVR1 and BMPR1A), and recruiting SMAD proteins that are translocated to the nucleus to regulate target gene expression. In Rattus norvegicus (Rat), this protein is Muellerian-inhibiting factor (Amh).